The sequence spans 245 residues: 8-amino-3,8-dideoxy-manno-octulosonate cytidylyltransferase (245 aa).

This sequence belongs to the KdsB family.

The protein localises to the cytoplasm. The catalysed reaction is 8-amino-3,8-dideoxy-alpha-D-manno-octulosonate + CTP = CMP-8-amino-3,8-dideoxy-alpha-D-manno-oct-2-ulosonate + diphosphate. The protein operates within bacterial outer membrane biogenesis; lipopolysaccharide biosynthesis. In terms of biological role, activates KDO8N (a required 8-carbon sugar) for incorporation into bacterial lipopolysaccharide in the Shewanella genus. The protein is 8-amino-3,8-dideoxy-manno-octulosonate cytidylyltransferase of Shewanella sp. (strain W3-18-1).